We begin with the raw amino-acid sequence, 573 residues long: Multidrug and toxin extrusion protein 2 (573 aa).

Over 1–46 (MEPAEDSLGATIQPPELVRVPRGRSLRILLGLRGALSPDVRREAAA) the chain is Cytoplasmic. A helical transmembrane segment spans residues 47-67 (LVALAGPVFLAQLMIFLISIV). Residues 68–81 (SSIFCGHLGKVELD) are Extracellular-facing. Residues 82 to 102 (AVTLAVSVVNVTGISVGTGLA) traverse the membrane as a helical segment. Residues 103–122 (SACDTLMSQSFGGKNLKRVG) are Cytoplasmic-facing. A helical membrane pass occupies residues 123–143 (VILQRGILILLLCCFPCWAIF). At 144–161 (LNTERLLLLLRQDPDVAR) the chain is on the extracellular side. A helical transmembrane segment spans residues 162–182 (LAQVYVMICIPALPAAFLFQL). The Cytoplasmic segment spans residues 183–196 (QTRYLQSQGIIMPQ). Residues 197 to 217 (VIVGIAANVVNVGMNAFLLYA) traverse the membrane as a helical segment. Residues 218-225 (LDLGVVGS) are Extracellular-facing. A helical transmembrane segment spans residues 226–246 (AWANTTSQFFLSALLFLYVWW). The Cytoplasmic segment spans residues 247–266 (KRIHIHTWGGWTRECFQEWS). A helical transmembrane segment spans residues 267–286 (SYTRLAIPSMFMVCIEWWTF). Residues 287-304 (EIGTFLAGLVNVTELGAQ) are Extracellular-facing. Residues 305–325 (AVIYELASVAYMVPFGFGVAA) traverse the membrane as a helical segment. At 326–345 (SVRVGNALGAGNADQARCSC) the chain is on the cytoplasmic side. Residues 346 to 366 (TTVLLCAGVCALLVGILLAAL) form a helical membrane-spanning segment. Over 367-379 (KDVVAYIFTNDKD) the chain is Extracellular. A helical transmembrane segment spans residues 380–400 (IISLVSQVMPIFAPFHLFDAL). Over 401–415 (AGTCGGVLRGTGKQK) the chain is Cytoplasmic. A helical transmembrane segment spans residues 416–436 (IGAVLNTIGYYGFGFPIGVSL). At 437-443 (MFAAKLG) the chain is on the extracellular side. Residues 444-464 (IIGLWAGLIVCVSFQAFSYLI) traverse the membrane as a helical segment. The Cytoplasmic segment spans residues 465–545 (YILRTNWSRV…VGEVLTGRQL (81 aa)). A helical membrane pass occupies residues 546 to 566 (VFYRGMALTVSVAVLIAGIVV). Over 567–573 (RVFNDRG) the chain is Extracellular.

It belongs to the multi antimicrobial extrusion (MATE) (TC 2.A.66.1) family. As to expression, expressed in testis; especially in testicular Leydig cells.

Its subcellular location is the cell membrane. In terms of biological role, multidrug efflux pump that functions as a H(+)/organic cation antiporter. May mediate testosterone efflux from the Leydig cells in the testes. This chain is Multidrug and toxin extrusion protein 2 (Slc47a2), found in Mus musculus (Mouse).